A 770-amino-acid polypeptide reads, in one-letter code: uncharacterized protein (770 aa).

Positions 1–24 (MVSAAWLRYPSLLTLGILVSRVAA) are cleaved as a signal peptide. 4 N-linked (GlcNAc...) asparagine glycosylation sites follow: N78, N204, N533, and N638. Positions 746–770 (SWGTGQNDVPPSLGAGIKRDGLRFT) are disordered.

This sequence belongs to the glycosyl hydrolase 92 family.

The protein resides in the secreted. This is an uncharacterized protein from Arthroderma benhamiae (strain ATCC MYA-4681 / CBS 112371) (Trichophyton mentagrophytes).